The primary structure comprises 738 residues: Phosphoribosylformylglycinamidine synthase subunit PurL (738 aa).

His41 is an active-site residue. ATP is bound by residues Tyr44 and Lys83. Residue Glu85 participates in Mg(2+) binding. Substrate is bound by residues 86-89 and Arg108; that span reads SHNH. The Proton acceptor role is filled by His87. Asp109 serves as a coordination point for Mg(2+). A substrate-binding site is contributed by Gln233. Mg(2+) is bound at residue Asp261. 305–307 is a substrate binding site; sequence ESQ. Residues Asp490 and Gly527 each contribute to the ATP site. Asn528 contacts Mg(2+). Ser530 serves as a coordination point for substrate.

The protein belongs to the FGAMS family. Monomer. Part of the FGAM synthase complex composed of 1 PurL, 1 PurQ and 2 PurS subunits.

It is found in the cytoplasm. It catalyses the reaction N(2)-formyl-N(1)-(5-phospho-beta-D-ribosyl)glycinamide + L-glutamine + ATP + H2O = 2-formamido-N(1)-(5-O-phospho-beta-D-ribosyl)acetamidine + L-glutamate + ADP + phosphate + H(+). Its pathway is purine metabolism; IMP biosynthesis via de novo pathway; 5-amino-1-(5-phospho-D-ribosyl)imidazole from N(2)-formyl-N(1)-(5-phospho-D-ribosyl)glycinamide: step 1/2. In terms of biological role, part of the phosphoribosylformylglycinamidine synthase complex involved in the purines biosynthetic pathway. Catalyzes the ATP-dependent conversion of formylglycinamide ribonucleotide (FGAR) and glutamine to yield formylglycinamidine ribonucleotide (FGAM) and glutamate. The FGAM synthase complex is composed of three subunits. PurQ produces an ammonia molecule by converting glutamine to glutamate. PurL transfers the ammonia molecule to FGAR to form FGAM in an ATP-dependent manner. PurS interacts with PurQ and PurL and is thought to assist in the transfer of the ammonia molecule from PurQ to PurL. The polypeptide is Phosphoribosylformylglycinamidine synthase subunit PurL (Alkaliphilus metalliredigens (strain QYMF)).